Reading from the N-terminus, the 104-residue chain is Circadian clock oscillator protein KaiB (104 aa).

This sequence belongs to the KaiB family. In terms of assembly, the KaiABC complex composition changes during the circadian cycle to control KaiC phosphorylation. Complexes KaiC(6), KaiA(2-4):KaiC(6), KaiB(6):KaiC(6) and KaiC(6):KaiB(6):KaiA(12) are among the most important forms, many form cooperatively. Undergoes a major conformational rearrangment; in the free state forms homotetramers as a dimer of dimers. When bound to the CI domain of KaiC switches to a monomeric thioredoxin-fold (KaiB(fs)). KaiB(fs) binds CikA, leading it to dephosphorylate phospho-RpaA.

Key component of the KaiABC oscillator complex, which constitutes the main circadian regulator in cyanobacteria. Complex composition changes during the circadian cycle to control KaiC phosphorylation. KaiA stimulates KaiC autophosphorylation, while KaiB sequesters KaiA, leading to KaiC autodephosphorylation. Phospho-Ser-431 KaiC accumulation triggers binding of KaiB to form the KaiB(6):KaiC(6) complex, leading to changes in output regulators CikA and SasA. KaiB switches to a thioredoxin-like fold (KaiB(fs)) when bound to KaiC. KaiB(6):KaiC(6) formation exposes a site for KaiA binding that sequesters KaiA from KaiC, making the KaiC(6):KaiB(6):KaiA(12) complex that results in KaiC autodephosphorylation. Its function is as follows. A metamorphic protein which reversibly switches between an inactive tetrameric fold and a rare, thioredoxin-like monomeric fold (KaiB(fs)). KaiB(fs) binds phospho-KaiC, KaiA and CikA. KaiA and CikA compete for binding to KaiB(fs), and KaiB(fs) and SasA compete for binding to KaiC, thus the clock oscillator and output signal pathway are tightly coupled. The chain is Circadian clock oscillator protein KaiB from Microcystis aeruginosa (strain NIES-843 / IAM M-2473).